We begin with the raw amino-acid sequence, 611 residues long: Major facilitator superfamily domain-containing protein YCR023C (611 aa).

The Extracellular portion of the chain corresponds to 1 to 89 (MARQKLTFKE…GRFSEKHGRK (89 aa)). The helical transmembrane segment at 90–110 (ITLTCGLIGTSVSLLILGFSR) threads the bilayer. Over 111–152 (NFYQALVARSLMGLLNGNVGVIRTIIGEIATERKHQALAFST) the chain is Cytoplasmic. A helical membrane pass occupies residues 153–173 (MPLLFQFGAVVGPMIGGFLVF). At 174 to 199 (RDGTMNEVPLWFPHFAKRIIRSYPYA) the chain is on the extracellular side. Residues 200-220 (LPNVVVCMFLMFGLTNATLFL) traverse the membrane as a helical segment. Topologically, residues 221–353 (EETHPAFKDR…SIFHHVFHTK (133 aa)) are cytoplasmic. Basic and acidic residues predominate over residues 261 to 271 (DDSENIHHRNE). Positions 261–301 (DDSENIHHRNENVNSIRGQDSEEDENSPLVNTTNDDDTESI) are disordered. Residue Ser313 is modified to Phosphoserine. Residues 354-372 (VFYPISVNFIMALHLIVYN) traverse the membrane as a helical segment. Over 373–413 (EFLPVFLAYDLAVDPENPKKLASKFPWKISGGIGYEPEQTG) the chain is Extracellular. A helical membrane pass occupies residues 414–434 (TLLSTTGIFGCFVVIFIFPIV). The Cytoplasmic portion of the chain corresponds to 435 to 442 (DRNFDCLT). A helical membrane pass occupies residues 443–463 (IFRTLVKLYPIMYVMVPYVVF). Residues 464–542 (LQNERIPSWY…YIMSWSQQND (79 aa)) are Extracellular-facing. Residues 543–563 (VAWVSWWSLSLFCMVALYQSY) traverse the membrane as a helical segment. Topologically, residues 564–611 (KIAPIDDNENELHGQGSEDAYNSQSQSSDLRMAHRSSLSSLSNQRCTT) are cytoplasmic. Ser603 bears the Phosphoserine mark.

Belongs to the major facilitator superfamily.

Its subcellular location is the membrane. It catalyses the reaction chloride(in) = chloride(out). Functionally, outward-rectifying chloride channel involved in chloride homeostasis. In Saccharomyces cerevisiae (strain ATCC 204508 / S288c) (Baker's yeast), this protein is Major facilitator superfamily domain-containing protein YCR023C.